Reading from the N-terminus, the 352-residue chain is B1 bradykinin receptor (352 aa).

Over 1 to 41 (MASWPPLELQSSNQSQLFPQNATACDNAPEAWDLLHRVLPT) the chain is Extracellular. Asn-13 and Asn-21 each carry an N-linked (GlcNAc...) asparagine glycan. Residues 42-62 (FIISICSFGLLGNLFVLLVFL) form a helical membrane-spanning segment. The Cytoplasmic segment spans residues 63-72 (LPRRRLNVAE). Residues 73-93 (IYLANLAASDLVFVLGLPFWA) form a helical membrane-spanning segment. The Extracellular portion of the chain corresponds to 94-110 (ENIWNQFNWPFGALLCR). A disulfide bond links Cys-109 and Cys-188. The chain crosses the membrane as a helical span at residues 111–131 (GINGVIKANLFISIFLVVAIS). Residues 132-153 (QDRYCLLVHPMASRRRQRRRQA) are Cytoplasmic-facing. The helical transmembrane segment at 154 to 174 (RVTCVLIWVVGGLLSIPTFLL) threads the bilayer. The Extracellular segment spans residues 175–206 (RSIQAVPDLNITACILLLPHEAWHFARIVELN). Asn-184 carries N-linked (GlcNAc...) asparagine glycosylation. A helical transmembrane segment spans residues 207 to 227 (ILAFLLPLAAIVFFNYHILAS). Topologically, residues 228–250 (LRGREEVSRTRCGGRKDSKTTAL) are cytoplasmic. A helical membrane pass occupies residues 251 to 271 (ILTLVVAFLVCWAPYHFFAFL). At 272-294 (EFLFQVQAIRGCFWEDFIDLGLQ) the chain is on the extracellular side. The chain crosses the membrane as a helical span at residues 295 to 315 (LANFLAFTNSSLNPVIYVFVG). Topologically, residues 316–352 (RLFRTKVWELYKQCTPKSLAPISSSHRKEIFQLFWRN) are cytoplasmic. Cys-329 carries the S-palmitoyl cysteine lipid modification.

The protein belongs to the G-protein coupled receptor 1 family. Bradykinin receptor subfamily. BDKRB1 sub-subfamily.

It is found in the cell membrane. This is a receptor for bradykinin. Could be a factor in chronic pain and inflammation. The chain is B1 bradykinin receptor (BDKRB1) from Chlorocebus aethiops (Green monkey).